A 325-amino-acid chain; its full sequence is uncharacterized protein (325 aa).

The segment at 296–325 (QRTLSSSMEEADRPRRMSVTQPHLPPVPSA) is disordered.

The protein belongs to the NDRG family.

This is an uncharacterized protein from Caenorhabditis elegans.